The chain runs to 382 residues: Carbamoyl phosphate synthase small chain (382 aa).

The tract at residues 1-189 is CPSase; that stretch reads MIKSALLVLE…GLPEAKKEDE (189 aa). Positions 47, 241, and 243 each coordinate L-glutamine. The 188-residue stretch at 193 to 380 folds into the Glutamine amidotransferase type-1 domain; that stretch reads HVVAYDFGAK…IALIEQYRKT (188 aa). C269 serves as the catalytic Nucleophile. L270, Q273, N311, G313, and F314 together coordinate L-glutamine. Active-site residues include H353 and E355.

It belongs to the CarA family. Composed of two chains; the small (or glutamine) chain promotes the hydrolysis of glutamine to ammonia, which is used by the large (or ammonia) chain to synthesize carbamoyl phosphate. Tetramer of heterodimers (alpha,beta)4.

The catalysed reaction is hydrogencarbonate + L-glutamine + 2 ATP + H2O = carbamoyl phosphate + L-glutamate + 2 ADP + phosphate + 2 H(+). It carries out the reaction L-glutamine + H2O = L-glutamate + NH4(+). The protein operates within amino-acid biosynthesis; L-arginine biosynthesis; carbamoyl phosphate from bicarbonate: step 1/1. It functions in the pathway pyrimidine metabolism; UMP biosynthesis via de novo pathway; (S)-dihydroorotate from bicarbonate: step 1/3. Its function is as follows. Small subunit of the glutamine-dependent carbamoyl phosphate synthetase (CPSase). CPSase catalyzes the formation of carbamoyl phosphate from the ammonia moiety of glutamine, carbonate, and phosphate donated by ATP, constituting the first step of 2 biosynthetic pathways, one leading to arginine and/or urea and the other to pyrimidine nucleotides. The small subunit (glutamine amidotransferase) binds and cleaves glutamine to supply the large subunit with the substrate ammonia. In Escherichia coli O6:H1 (strain CFT073 / ATCC 700928 / UPEC), this protein is Carbamoyl phosphate synthase small chain.